The sequence spans 554 residues: Carboxylesterase 1C (554 aa).

The N-terminal stretch at Met1–Gly18 is a signal peptide. N-linked (GlcNAc...) asparagine glycosylation is present at Asn79. Residues Cys87 and Cys116 are joined by a disulfide bond. The active-site Acyl-ester intermediate is the Ser221. Cysteines 273 and 284 form a disulfide. N-linked (GlcNAc...) asparagine glycosylation is found at Asn274 and Asn304. Glu342 (charge relay system) is an active-site residue. Residue Asn377 is glycosylated (N-linked (GlcNAc...) asparagine). The Charge relay system role is filled by His455. Phosphoserine is present on Ser473. Asn478 is a glycosylation site (N-linked (GlcNAc...) asparagine). Residues Thr551–Lys554 carry the Prevents secretion from ER motif.

The protein belongs to the type-B carboxylesterase/lipase family. Expressed in lung, kidney and liver.

The protein localises to the endoplasmic reticulum lumen. It carries out the reaction a carboxylic ester + H2O = an alcohol + a carboxylate + H(+). Functionally, involved in the detoxification of xenobiotics and in the activation of ester and amide prodrugs. Involved in the extracellular metabolism of lung surfactant. The protein is Carboxylesterase 1C (Ces1c) of Mus musculus (Mouse).